A 206-amino-acid polypeptide reads, in one-letter code: Protein GrpE (206 aa).

This sequence belongs to the GrpE family. In terms of assembly, homodimer.

It localises to the cytoplasm. Its function is as follows. Participates actively in the response to hyperosmotic and heat shock by preventing the aggregation of stress-denatured proteins, in association with DnaK and GrpE. It is the nucleotide exchange factor for DnaK and may function as a thermosensor. Unfolded proteins bind initially to DnaJ; upon interaction with the DnaJ-bound protein, DnaK hydrolyzes its bound ATP, resulting in the formation of a stable complex. GrpE releases ADP from DnaK; ATP binding to DnaK triggers the release of the substrate protein, thus completing the reaction cycle. Several rounds of ATP-dependent interactions between DnaJ, DnaK and GrpE are required for fully efficient folding. The sequence is that of Protein GrpE from Psychromonas ingrahamii (strain DSM 17664 / CCUG 51855 / 37).